The sequence spans 206 residues: RNA pyrophosphohydrolase (206 aa).

One can recognise a Nudix hydrolase domain in the interval 6–149; that stretch reads GYRPNVGIVL…KRGVYARALR (144 aa). The Nudix box motif lies at 38–59; that stretch reads GGMNTDETPVEAMYRELQEETG. The tract at residues 175–206 is disordered; sequence MPGHTAGHDRPRKRPRSRGYWPKKAQGDVPPT.

The protein belongs to the Nudix hydrolase family. RppH subfamily. A divalent metal cation serves as cofactor.

In terms of biological role, accelerates the degradation of transcripts by removing pyrophosphate from the 5'-end of triphosphorylated RNA, leading to a more labile monophosphorylated state that can stimulate subsequent ribonuclease cleavage. This is RNA pyrophosphohydrolase from Stenotrophomonas maltophilia (strain R551-3).